Here is a 96-residue protein sequence, read N- to C-terminus: MSRVCELTGKGVQTGNNVSHANNKTKRRFLPNLCQVTLISDALGQRFRLRVSAAALRSVEHRGGLDAFLLKSGENELSMRARLLRRQIAKKTAEAA.

This sequence belongs to the bacterial ribosomal protein bL28 family.

The polypeptide is Large ribosomal subunit protein bL28 (Agrobacterium fabrum (strain C58 / ATCC 33970) (Agrobacterium tumefaciens (strain C58))).